The following is a 107-amino-acid chain: Toxin MT2730 (107 aa).

The segment at 1–42 is disordered; that stretch reads MTHKRTKRQPAIAAGLNAPRRNRVGRQHGWPADVPSAEQRRA.

Its function is as follows. Toxic component of a type II toxin-antitoxin (TA) system. Its toxic effect is neutralized by coexpression with cognate antitoxin MT2731. This chain is Toxin MT2730, found in Mycobacterium tuberculosis (strain CDC 1551 / Oshkosh).